The following is a 386-amino-acid chain: Bifunctional enzyme IspD/IspF (386 aa).

Positions 1–225 (MYNFVTLSIL…SCLSAPSSDT (225 aa)) are 2-C-methyl-D-erythritol 4-phosphate cytidylyltransferase. Residues 226–386 (LSGVGFDVHA…NLKYFDWTKI (161 aa)) are 2-C-methyl-D-erythritol 2,4-cyclodiphosphate synthase. Asp232 and His234 together coordinate a divalent metal cation. 4-CDP-2-C-methyl-D-erythritol 2-phosphate-binding positions include 232-234 (DVH) and 258-259 (HS). Residue His266 coordinates a divalent metal cation. 4-CDP-2-C-methyl-D-erythritol 2-phosphate contacts are provided by residues 280–282 (DIG), 285–289 (FPDND), 356–359 (TTTE), Phe363, and Arg366.

It in the N-terminal section; belongs to the IspD/TarI cytidylyltransferase family. IspD subfamily. The protein in the C-terminal section; belongs to the IspF family. A divalent metal cation serves as cofactor.

It catalyses the reaction 2-C-methyl-D-erythritol 4-phosphate + CTP + H(+) = 4-CDP-2-C-methyl-D-erythritol + diphosphate. The enzyme catalyses 4-CDP-2-C-methyl-D-erythritol 2-phosphate = 2-C-methyl-D-erythritol 2,4-cyclic diphosphate + CMP. Its pathway is isoprenoid biosynthesis; isopentenyl diphosphate biosynthesis via DXP pathway; isopentenyl diphosphate from 1-deoxy-D-xylulose 5-phosphate: step 2/6. It functions in the pathway isoprenoid biosynthesis; isopentenyl diphosphate biosynthesis via DXP pathway; isopentenyl diphosphate from 1-deoxy-D-xylulose 5-phosphate: step 4/6. In terms of biological role, bifunctional enzyme that catalyzes the formation of 4-diphosphocytidyl-2-C-methyl-D-erythritol from CTP and 2-C-methyl-D-erythritol 4-phosphate (MEP) (IspD), and catalyzes the conversion of 4-diphosphocytidyl-2-C-methyl-D-erythritol 2-phosphate (CDP-ME2P) to 2-C-methyl-D-erythritol 2,4-cyclodiphosphate (ME-CPP) with a corresponding release of cytidine 5-monophosphate (CMP) (IspF). This Sulfurimonas denitrificans (strain ATCC 33889 / DSM 1251) (Thiomicrospira denitrificans (strain ATCC 33889 / DSM 1251)) protein is Bifunctional enzyme IspD/IspF.